Consider the following 326-residue polypeptide: Sulfate/thiosulfate import ATP-binding protein CysA (326 aa).

The ABC transporter domain occupies 3 to 237 (IEVRNVSKNF…PSNDFVYHFL (235 aa)). 35 to 42 (GPSGCGKT) contacts ATP.

Belongs to the ABC transporter superfamily. Sulfate/tungstate importer (TC 3.A.1.6) family. The complex is composed of two ATP-binding proteins (CysA), two transmembrane proteins (CysT and CysW) and a solute-binding protein (CysP).

The protein localises to the cell inner membrane. It carries out the reaction sulfate(out) + ATP + H2O = sulfate(in) + ADP + phosphate + H(+). The catalysed reaction is thiosulfate(out) + ATP + H2O = thiosulfate(in) + ADP + phosphate + H(+). Its function is as follows. Part of the ABC transporter complex CysAWTP involved in sulfate/thiosulfate import. Responsible for energy coupling to the transport system. The protein is Sulfate/thiosulfate import ATP-binding protein CysA of Pseudomonas syringae pv. tomato (strain ATCC BAA-871 / DC3000).